The sequence spans 439 residues: Phosphoribosylamine--glycine ligase (439 aa).

The region spanning 109–317 (REFMERNKIP…LVEISERIID (209 aa)) is the ATP-grasp domain. 136-195 (IDEFGKPVVVKPLGLTGGKGVKVVGYQLKDNEEAKEYAEYLIRKDGKVLIEERTDGVEFT) provides a ligand contact to ATP. 3 residues coordinate Mg(2+): Gln275, Glu287, and Asn289. Gln275, Glu287, and Asn289 together coordinate Mn(2+).

It belongs to the GARS family. Mg(2+) is required as a cofactor. Requires Mn(2+) as cofactor.

The enzyme catalyses 5-phospho-beta-D-ribosylamine + glycine + ATP = N(1)-(5-phospho-beta-D-ribosyl)glycinamide + ADP + phosphate + H(+). It participates in purine metabolism; IMP biosynthesis via de novo pathway; N(1)-(5-phospho-D-ribosyl)glycinamide from 5-phospho-alpha-D-ribose 1-diphosphate: step 2/2. The sequence is that of Phosphoribosylamine--glycine ligase from Pyrococcus furiosus (strain ATCC 43587 / DSM 3638 / JCM 8422 / Vc1).